The following is a 255-amino-acid chain: Indole-3-glycerol phosphate synthase (255 aa).

It belongs to the TrpC family.

The enzyme catalyses 1-(2-carboxyphenylamino)-1-deoxy-D-ribulose 5-phosphate + H(+) = (1S,2R)-1-C-(indol-3-yl)glycerol 3-phosphate + CO2 + H2O. It participates in amino-acid biosynthesis; L-tryptophan biosynthesis; L-tryptophan from chorismate: step 4/5. In Shouchella clausii (strain KSM-K16) (Alkalihalobacillus clausii), this protein is Indole-3-glycerol phosphate synthase.